A 776-amino-acid polypeptide reads, in one-letter code: Microtubule-associated protein tau (776 aa).

Basic and acidic residues predominate over residues 1–26 (MAEPRQEFEVMEDHAGTYGLGDRKDQ). 2 disordered regions span residues 1–263 (MAEP…PAKG) and 276–591 (STEI…LKNV). Alanine 2 is modified (N-acetylalanine). Residues tyrosine 18 and tyrosine 29 each carry the phosphotyrosine modification. Lysine 44 is covalently cross-linked (Glycyl lysine isopeptide (Lys-Gly) (interchain with G-Cter in ubiquitin)). 2 positions are modified to phosphoserine: serine 46 and serine 61. Positions 61-71 (SETSDAKSTPT) are enriched in polar residues. A phosphothreonine mark is found at threonine 69, threonine 71, and threonine 111. Basic and acidic residues-rich tracts occupy residues 179 to 189 (EGGRHAPELLK) and 207 to 216 (GGKERPGSKE). Phosphoserine is present on serine 214. Residues 217–228 (EVDEDRDVDESS) are compositionally biased toward acidic residues. A compositionally biased stretch (basic and acidic residues) spans 314-323 (EQAHSEEHLG). The span at 324–340 (RAAFPGAPGEGPEARGP) shows a compositional bias: low complexity. 2 stretches are compositionally biased toward basic and acidic residues: residues 344-356 (EDTK…ESSE) and 381-393 (KSKD…DKKA). Positions 440 to 452 (KYVSSVTPRTGSS) are enriched in polar residues. Basic and acidic residues predominate over residues 455-466 (KEMKLKGADGKT). Residue threonine 470 is modified to Phosphothreonine. The residue at position 472 (arginine 472) is an Omega-N-methylarginine. Residue lysine 480 is modified to N6,N6-dimethyllysine; alternate. Lysine 480 is modified (N6-acetyllysine; alternate). Residues threonine 486, threonine 492, and threonine 498 each carry the phosphothreonine modification. Serine 502, serine 526, and serine 530 each carry phosphoserine. Residues 517–528 (RSERGEPPKSGD) are compositionally biased toward basic and acidic residues. The segment covering 529–549 (RSGYSSPGSPGTPGSRSRTPS) has biased composition (low complexity). Tyrosine 532 carries the phosphotyrosine modification. 3 positions are modified to phosphoserine: serine 533, serine 534, and serine 537. A phosphothreonine mark is found at threonine 540 and threonine 547. Serine 549 carries the post-translational modification Phosphoserine. A Phosphothreonine modification is found at threonine 552. Lysine 560 carries the post-translational modification N6-acetyllysine. Residue threonine 566 is modified to Phosphothreonine. Serine 570 and serine 572 each carry phosphoserine. Tau/MAP repeat units follow at residues 579 to 609 (QTAP…GGGK), 610 to 640 (VQII…GGGS), 641 to 671 (VQIV…GGGQ), and 672 to 703 (VEVK…GGGN). Lysine 589 is covalently cross-linked (Glycyl lysine isopeptide (Lys-Gly) (interchain with G-Cter in ubiquitin)). N6-acetyllysine; alternate is present on lysine 594. Lysine 594 bears the N6-methyllysine; alternate mark. Residue lysine 594 forms a Glycyl lysine isopeptide (Lys-Gly) (interchain with G-Cter in ubiquitin); alternate linkage. At serine 597 the chain carries Phosphoserine. Residue lysine 602 forms a Glycyl lysine isopeptide (Lys-Gly) (interchain with G-Cter in ubiquitin) linkage. Lysine 616 bears the N6-acetyllysine; alternate mark. Lysine 616 participates in a covalent cross-link: Glycyl lysine isopeptide (Lys-Gly) (interchain with G-Cter in ubiquitin); alternate. Serine 620 and serine 624 each carry phosphoserine. Position 625 is an N6-acetyllysine (lysine 625). A Phosphoserine modification is found at serine 628. Position 633 is an N6-acetyllysine; alternate (lysine 633). Residue lysine 633 forms a Glycyl lysine isopeptide (Lys-Gly) (interchain with G-Cter in ubiquitin); alternate linkage. Residue serine 640 is modified to Phosphoserine. At lysine 646 the chain carries N6,N6-dimethyllysine; alternate. 3 positions are modified to N6-acetyllysine; alternate: lysine 646, lysine 652, and lysine 656. Glycyl lysine isopeptide (Lys-Gly) (interchain with G-Cter in ubiquitin); alternate cross-links involve residues lysine 646, lysine 652, and lysine 656. Serine 659 carries the post-translational modification Phosphoserine. N6-acetyllysine; alternate occurs at positions 666, 678, and 682. Residues lysine 666, lysine 678, and lysine 682 each participate in a glycyl lysine isopeptide (Lys-Gly) (interchain with G-Cter in ubiquitin); alternate cross-link. Arginine 684 carries the omega-N-methylarginine modification. Phosphoserine is present on serine 687. Lysine 688 is covalently cross-linked (Glycyl lysine isopeptide (Lys-Gly) (interchain with G-Cter in ubiquitin)). Position 691 is a phosphoserine (serine 691). At lysine 704 the chain carries N6-acetyllysine; alternate. Lysine 704 participates in a covalent cross-link: Glycyl lysine isopeptide (Lys-Gly) (interchain with G-Cter in ubiquitin); alternate. Lysine 710 is covalently cross-linked (Glycyl lysine isopeptide (Lys-Gly) (interchain with G-Cter in ubiquitin)). Position 720 is an N6-acetyllysine; alternate (lysine 720). Lysine 720 is covalently cross-linked (Glycyl lysine isopeptide (Lys-Gly) (interchain with G-Cter in ubiquitin); alternate). Tyrosine 729 carries the phosphotyrosine modification. Serine 731 and serine 735 each carry phosphoserine. A disordered region spans residues 733 to 752 (VVSGDTSPRHLSNVSSTGSI). The segment covering 736–751 (GDTSPRHLSNVSSTGS) has biased composition (polar residues). Threonine 738 carries the post-translational modification Phosphothreonine. A phosphoserine mark is found at serine 739, serine 744, serine 751, and serine 757. The residue at position 762 (threonine 762) is a Phosphothreonine.

Interacts with MARK1, MARK2, MARK3 and MARK4. Interacts with SQSTM1 when polyubiquitinated. Interacts with PSMC2 through SQSTM1. Interacts with FKBP4. Binds to CSNK1D. Interacts with SGK1. Interacts with EPM2A; the interaction dephosphorylates MAPT at Ser-396. Interacts with PIN1. Interacts with LRRK2. Interacts with LRP1, leading to endocytosis; this interaction is reduced in the presence of LRPAP1/RAP. In terms of processing, polyubiquitinated. Requires functional TRAF6 and may provoke SQSTM1-dependent degradation by the proteasome. Post-translationally, phosphorylation at various serine and threonine residues in S-P or T-P motifs by proline-directed protein kinases (PDPK1, CDK1, CDK5, GSK3, MAPK) (a few sites per protein in interphase, more in mitosis), and at serine residues in K-X-G-S motifs by MAP/microtubule affinity-regulating kinase (MARK1, MARK2, MARK3 or MARK4), causing detachment from microtubules, and their disassembly. Phosphorylation at Ser-597 by BRSK1 and BRSK2 in neurons affects ability to bind microtubules and plays a role in neuron polarization. Phosphorylation at Ser-214 by SGK1 mediates microtubule depolymerization and neurite formation in hippocampal neurons. Phosphorylated by PHK. Dephosphorylation at several serine and threonine residues by the serine/threonine phosphatase PPP5C.

Its subcellular location is the cytoplasm. It localises to the cytosol. It is found in the cell membrane. The protein localises to the cytoskeleton. The protein resides in the cell projection. Its subcellular location is the axon. It localises to the dendrite. Promotes microtubule assembly and stability, and might be involved in the establishment and maintenance of neuronal polarity. The C-terminus binds axonal microtubules while the N-terminus binds neural plasma membrane components, suggesting that tau functions as a linker protein between both. Axonal polarity is predetermined by tau localization (in the neuronal cell) in the domain of the cell body defined by the centrosome. The short isoforms allow plasticity of the cytoskeleton whereas the longer isoforms may preferentially play a role in its stabilization. The polypeptide is Microtubule-associated protein tau (MAPT) (Gorilla gorilla gorilla (Western lowland gorilla)).